The chain runs to 461 residues: Anthocyanidin 3-O-glucoside 5-O-glucosyltransferase (461 aa).

Residues 1 to 15 form the signal peptide; that stretch reads MSRAHVLLATFPAQG. His16 serves as the catalytic Proton acceptor. Residue His16 participates in an anthocyanidin binding. UDP-alpha-D-glucose is bound by residues Gln338, His353, Trp356, Asn357, Ser358, Glu361, Asp377, and Gln378.

The protein belongs to the UDP-glycosyltransferase family.

The catalysed reaction is an anthocyanidin 3-O-beta-D-glucoside + UDP-alpha-D-glucose = an anthocyanidin 3,5-di-O-beta-D-glucoside + UDP + 2 H(+). The protein operates within pigment biosynthesis; anthocyanin biosynthesis. Its function is as follows. Catalyzes the glucosylation at the O-5 position of anthocyanidin 3-glucosides to form anthocyanidin 3,5-di-O-glucosides using UDP-glucose as sugar donor. Anthocyanidin 3,5-di-O-glucosides are molecules that are responsible for pigmentation. Also acts on anthocyanidin 3-O-(6-O-malonylglucoside). Much less active with hydroxycinnamoylglucose derivatives. No activity in the absence of the 3-O-glucoside group. The chain is Anthocyanidin 3-O-glucoside 5-O-glucosyltransferase (HGT8) from Verbena hybrida (Garden vervain).